A 173-amino-acid chain; its full sequence is Lipoprotein signal peptidase (173 aa).

4 helical membrane-spanning segments follow: residues 24-44 (PWLGLGVIWILLDQLTKIAIL), 55-75 (ITGFFNLVLAYNRGAAFSFLA), 80-100 (WQRWFFTGLGVAAALFIVWLL), and 105-125 (GQKLFCFALALILGGALGNVI). Residues Asp-135 and Asp-153 contribute to the active site. Residues 145-165 (HWPAFNVADCGICIGAVLLII) form a helical membrane-spanning segment.

This sequence belongs to the peptidase A8 family.

The protein resides in the cell inner membrane. It carries out the reaction Release of signal peptides from bacterial membrane prolipoproteins. Hydrolyzes -Xaa-Yaa-Zaa-|-(S,diacylglyceryl)Cys-, in which Xaa is hydrophobic (preferably Leu), and Yaa (Ala or Ser) and Zaa (Gly or Ala) have small, neutral side chains.. The protein operates within protein modification; lipoprotein biosynthesis (signal peptide cleavage). In terms of biological role, this protein specifically catalyzes the removal of signal peptides from prolipoproteins. The sequence is that of Lipoprotein signal peptidase from Ralstonia nicotianae (strain ATCC BAA-1114 / GMI1000) (Ralstonia solanacearum).